The following is a 130-amino-acid chain: 3-aminoacrylate deaminase RutC (130 aa).

It belongs to the RutC family.

The enzyme catalyses (Z)-3-aminoacrylate + H2O + H(+) = 3-oxopropanoate + NH4(+). In terms of biological role, involved in pyrimidine catabolism. Catalyzes the deamination of 3-aminoacrylate to malonic semialdehyde, a reaction that can also occur spontaneously. RutC may facilitate the reaction and modulate the metabolic fitness, rather than catalyzing essential functions. The chain is 3-aminoacrylate deaminase RutC from Variovorax paradoxus (strain S110).